A 698-amino-acid polypeptide reads, in one-letter code: Interleukin-17 receptor C (698 aa).

The first 21 residues, 1–21 (MPVSWFLLSLALGRNPVVVSL), serve as a signal peptide directing secretion. The Extracellular segment spans residues 22 to 464 (ERLMEPQDTA…CPMDKYIHRR (443 aa)). Asparagine 182 carries an N-linked (GlcNAc...) asparagine glycan. A disulfide bridge connects residues cysteine 190 and cysteine 202. 4 N-linked (GlcNAc...) asparagine glycosylation sites follow: asparagine 209, asparagine 249, asparagine 255, and asparagine 259. Cystine bridges form between cysteine 266-cysteine 316, cysteine 268-cysteine 284, cysteine 325-cysteine 334, cysteine 364-cysteine 378, cysteine 406-cysteine 413, and cysteine 440-cysteine 455. The helical transmembrane segment at 465 to 485 (WVLVWLACLLLAAALFFFLLL) threads the bilayer. The Cytoplasmic segment spans residues 486–698 (KKDRRKAARG…WDLGPCTTLE (213 aa)). Residues 496 to 645 (SRTALLLHSA…LPSQLPAFLD (150 aa)) enclose the SEFIR domain.

As to quaternary structure, homodimer; disulfide-linked. Heterodimer with IL17RA. Heterodimerization with IL17RA is independent of the cytoplasmic tail. Associates with non-glycosylated IL17RA constitutively. Binding of IL17A and IL17F induces association with glycosylated IL17RA. Forms complexes with 2:1 binding stoichiometry: two receptor chains for one interleukin molecule. IL17A homodimer preferentially drives the formation of IL17RA-IL17RC heterodimeric receptor complex, whereas IL17F homodimer forms predominantly complexes with IL17RC homodimer. IL17A-IL17F forms complexes with IL17RA-IL17RC, but with lower affinity when compared to IL17A homodimer. IL17RC chain cannot distinguish between IL17A and IL17F molecules, potentially enabling the formation of topologically distinct complexes. Interacts (through SEFIR domain and extended downstream region) with TRAF3IP2/ACT1 (phosphorylated). In terms of tissue distribution, highly expressed in colonic epithelial cells. Expressed in lung epithelial cells. Expressed in macrophages. Highly expressed in B-1a B cells and at a lower extent in B-1b and B-2 B cells (at protein level).

It is found in the cell membrane. Functionally, receptor for IL17A and IL17F, major effector cytokines of innate and adaptive immune system involved in antimicrobial host defense and maintenance of tissue integrity. Receptor for IL17A and IL17F homodimers as part of a heterodimeric complex with IL17RA. Receptor for the heterodimer formed by IL17A and IL17B as part of a heterodimeric complex with IL17RA. Has also been shown to be the cognate receptor for IL17F and to bind IL17A with high affinity without the need for IL17RA. Upon binding of IL17F homodimer triggers downstream activation of TRAF6 and NF-kappa-B signaling pathway. Induces transcriptional activation of IL33, a potent cytokine that stimulates group 2 innate lymphoid cells and adaptive T-helper 2 cells involved in pulmonary allergic response to fungi. Promotes sympathetic innervation of peripheral organs by coordinating the communication between gamma-delta T cells and parenchymal cells. Stimulates sympathetic innervation of thermogenic adipose tissue by driving TGFB1 expression. Binding of IL17A-IL17F to IL17RA-IL17RC heterodimeric receptor complex triggers homotypic interaction of IL17RA and IL17RC chains with TRAF3IP2 adapter through SEFIR domains. This leads to downstream TRAF6-mediated activation of NF-kappa-B and MAPkinase pathways ultimately resulting in transcriptional activation of cytokines, chemokines, antimicrobial peptides and matrix metalloproteinases, with potential strong immune inflammation. Primarily induces neutrophil activation and recruitment at infection and inflammatory sites. Stimulates the production of antimicrobial beta-defensins DEFB1, DEFB103A, and DEFB104A by mucosal epithelial cells, limiting the entry of microbes through the epithelial barriers. This is Interleukin-17 receptor C (Il17rc) from Mus musculus (Mouse).